The following is a 277-amino-acid chain: Bis(5'-nucleosyl)-tetraphosphatase, symmetrical (277 aa).

It belongs to the Ap4A hydrolase family.

The catalysed reaction is P(1),P(4)-bis(5'-adenosyl) tetraphosphate + H2O = 2 ADP + 2 H(+). Hydrolyzes diadenosine 5',5'''-P1,P4-tetraphosphate to yield ADP. This is Bis(5'-nucleosyl)-tetraphosphatase, symmetrical from Azotobacter vinelandii (strain DJ / ATCC BAA-1303).